A 185-amino-acid polypeptide reads, in one-letter code: Ribosome maturation factor RimP (185 aa).

Residues 162 to 185 (VRLERAADGAPERGGDRGDTEESR) are disordered.

This sequence belongs to the RimP family.

It localises to the cytoplasm. Required for maturation of 30S ribosomal subunits. This is Ribosome maturation factor RimP from Saccharopolyspora erythraea (strain ATCC 11635 / DSM 40517 / JCM 4748 / NBRC 13426 / NCIMB 8594 / NRRL 2338).